The following is a 138-amino-acid chain: Large ribosomal subunit protein uL16 (138 aa).

Over residues 1–13 (MLQPARRKYRKEQ) the composition is skewed to basic residues. Residues 1–22 (MLQPARRKYRKEQKGRNTGVAT) form a disordered region.

It belongs to the universal ribosomal protein uL16 family. As to quaternary structure, part of the 50S ribosomal subunit.

Functionally, binds 23S rRNA and is also seen to make contacts with the A and possibly P site tRNAs. This Paracidovorax citrulli (strain AAC00-1) (Acidovorax citrulli) protein is Large ribosomal subunit protein uL16.